A 244-amino-acid chain; its full sequence is Capsid protein (244 aa).

Residues 1-24 (MSTSKRKRADEAQWNKRSTKKKGS) carry the Bipartite nuclear localization signal motif. The interval 1–39 (MSTSKRKRADEAQWNKRSTKKKGSAPQAKKPGGKGERPS) is disordered.

The protein belongs to the geminiviridae capsid protein family. Homomultimer. Interacts with the movement protein. Binds to single-stranded and double-stranded viral DNA.

It is found in the virion. It localises to the host nucleus. Functionally, encapsidates the viral genome into characteristic twinned ('geminate') particles. Binds the genomic viral ssDNA and shuttles it into and out of the cell nucleus. Plays a role in protection of the genome from degradation, virus acquisition and transmission by insect vectors, infectivity, and systemic movement. The CP of monopartite geminiviruses is absolutely essential for virus movement. In Avena sativa (Oat), this protein is Capsid protein.